Here is a 215-residue protein sequence, read N- to C-terminus: Adenylate kinase (215 aa).

Gly-10–Thr-15 contacts ATP. An NMP region spans residues Ser-30–Val-59. AMP-binding positions include Thr-31, Arg-36, Glu-57–Val-59, Gly-82–Arg-85, and Gln-89. The interval Asn-123–Asp-160 is LID. Arg-124 lines the ATP pocket. Zn(2+)-binding residues include Cys-127 and Cys-130. Val-133–Tyr-134 is a binding site for ATP. Zn(2+) is bound by residues Cys-147 and Cys-150. Arg-157 and Arg-168 together coordinate AMP. Residue Gln-196 participates in ATP binding.

The protein belongs to the adenylate kinase family. In terms of assembly, monomer.

Its subcellular location is the cytoplasm. The enzyme catalyses AMP + ATP = 2 ADP. The protein operates within purine metabolism; AMP biosynthesis via salvage pathway; AMP from ADP: step 1/1. Functionally, catalyzes the reversible transfer of the terminal phosphate group between ATP and AMP. Plays an important role in cellular energy homeostasis and in adenine nucleotide metabolism. The chain is Adenylate kinase from Petrotoga mobilis (strain DSM 10674 / SJ95).